Reading from the N-terminus, the 32-residue chain is Cytochrome b6-f complex subunit 7 (32 aa).

A helical transmembrane segment spans residues 9 to 27 (AVVFWVLIPVGLAGGALLL).

It belongs to the PetM family. The 4 large subunits of the cytochrome b6-f complex are cytochrome b6, subunit IV (17 kDa polypeptide, PetD), cytochrome f and the Rieske protein, while the 4 small subunits are PetG, PetL, PetM and PetN. The complex functions as a dimer.

The protein resides in the cellular thylakoid membrane. Its function is as follows. Component of the cytochrome b6-f complex, which mediates electron transfer between photosystem II (PSII) and photosystem I (PSI), cyclic electron flow around PSI, and state transitions. In Synechococcus sp. (strain CC9311), this protein is Cytochrome b6-f complex subunit 7.